Reading from the N-terminus, the 607-residue chain is DNA mismatch repair protein MutL (607 aa).

The protein belongs to the DNA mismatch repair MutL/HexB family.

Its function is as follows. This protein is involved in the repair of mismatches in DNA. It is required for dam-dependent methyl-directed DNA mismatch repair. May act as a 'molecular matchmaker', a protein that promotes the formation of a stable complex between two or more DNA-binding proteins in an ATP-dependent manner without itself being part of a final effector complex. In Anaeromyxobacter dehalogenans (strain 2CP-1 / ATCC BAA-258), this protein is DNA mismatch repair protein MutL.